The following is a 166-amino-acid chain: Lipoprotein signal peptidase (166 aa).

The next 3 membrane-spanning stretches (helical) occupy residues 12–32, 70–90, and 102–122; these read WLWLVVVVLIIDLGSKYLILQ, WFFAGIAIGICVILLVMMYRS, and ALIIGGALGNLFDRLWHGFVV. Residues Asp-123 and Asp-141 contribute to the active site. A helical membrane pass occupies residues 137–157; sequence FNLADSAICIGAALIVLEGFL.

Belongs to the peptidase A8 family.

Its subcellular location is the cell inner membrane. The enzyme catalyses Release of signal peptides from bacterial membrane prolipoproteins. Hydrolyzes -Xaa-Yaa-Zaa-|-(S,diacylglyceryl)Cys-, in which Xaa is hydrophobic (preferably Leu), and Yaa (Ala or Ser) and Zaa (Gly or Ala) have small, neutral side chains.. The protein operates within protein modification; lipoprotein biosynthesis (signal peptide cleavage). Its function is as follows. This protein specifically catalyzes the removal of signal peptides from prolipoproteins. The protein is Lipoprotein signal peptidase of Salmonella agona (strain SL483).